Consider the following 725-residue polypeptide: Protein ECM27 (725 aa).

Helical transmembrane passes span 21–41 (VTFI…LGIC), 119–139 (VLGA…IIMS), 157–177 (LLFS…NQVT), 178–198 (VLNC…KLTF), 397–417 (ISDA…KLSC), 439–459 (LPII…CSIL), 470–490 (LVYL…TAFI), 526–546 (IQII…SLLA), 559–579 (ILGL…NSVG), 621–641 (LNSM…IGAF), 668–688 (FIVS…FFGG), and 704–724 (GISM…LELF).

The protein belongs to the Ca(2+):cation antiporter (CaCA) (TC 2.A.19) family.

The protein localises to the membrane. This is Protein ECM27 (ECM27) from Saccharomyces cerevisiae (strain ATCC 204508 / S288c) (Baker's yeast).